We begin with the raw amino-acid sequence, 88 residues long: Phosphoribosyl-ATP pyrophosphatase (88 aa).

The protein belongs to the PRA-PH family.

Its subcellular location is the cytoplasm. It carries out the reaction 1-(5-phospho-beta-D-ribosyl)-ATP + H2O = 1-(5-phospho-beta-D-ribosyl)-5'-AMP + diphosphate + H(+). The protein operates within amino-acid biosynthesis; L-histidine biosynthesis; L-histidine from 5-phospho-alpha-D-ribose 1-diphosphate: step 2/9. The protein is Phosphoribosyl-ATP pyrophosphatase of Cutibacterium acnes (strain DSM 16379 / KPA171202) (Propionibacterium acnes).